The primary structure comprises 324 residues: Galectin-4 (324 aa).

2 Galectin domains span residues 19 to 150 (YKRP…INFL) and 196 to 324 (YVGT…YVQI). 257–263 (WGSEERK) contacts a beta-D-galactoside. At serine 259 the chain carries Phosphoserine.

In terms of assembly, monomer. In terms of tissue distribution, highly expressed in full-length form in small and large intestine and stomach but was not detected in other tissues including lung, liver, kidney and spleen.

Functionally, galectin that binds lactose and a related range of sugars. The polypeptide is Galectin-4 (Lgals4) (Rattus norvegicus (Rat)).